The sequence spans 236 residues: ATP synthase subunit a, chloroplastic (236 aa).

The next 5 membrane-spanning stretches (helical) occupy residues 25–45, 87–107, 123–143, 180–202, and 210–230; these read MHGQ…AFAV, FIGT…LIPW, DINT…YAGL, LFGN…PLVI, and GLFT…AYIG.

This sequence belongs to the ATPase A chain family. As to quaternary structure, F-type ATPases have 2 components, CF(1) - the catalytic core - and CF(0) - the membrane proton channel. CF(1) has five subunits: alpha(3), beta(3), gamma(1), delta(1), epsilon(1). CF(0) has four main subunits: a, b, b' and c.

It localises to the plastid. It is found in the chloroplast thylakoid membrane. Functionally, key component of the proton channel; it plays a direct role in the translocation of protons across the membrane. This is ATP synthase subunit a, chloroplastic from Ostreococcus tauri.